A 166-amino-acid polypeptide reads, in one-letter code: NADH-quinone oxidoreductase subunit E (166 aa).

Residues C92, C97, C133, and C137 each coordinate [2Fe-2S] cluster.

This sequence belongs to the complex I 24 kDa subunit family. As to quaternary structure, composed of 13 different subunits. Subunits NuoCD, E, F, and G constitute the peripheral sector of the complex. It depends on [2Fe-2S] cluster as a cofactor.

The catalysed reaction is a quinone + NADH + 5 H(+)(in) = a quinol + NAD(+) + 4 H(+)(out). In terms of biological role, NDH-1 shuttles electrons from NADH, via FMN and iron-sulfur (Fe-S) centers, to quinones in the respiratory chain. The immediate electron acceptor for the enzyme in this species is believed to be ubiquinone. Couples the redox reaction to proton translocation (for every two electrons transferred, four hydrogen ions are translocated across the cytoplasmic membrane), and thus conserves the redox energy in a proton gradient. The sequence is that of NADH-quinone oxidoreductase subunit E (nuoE) from Shigella flexneri.